We begin with the raw amino-acid sequence, 148 residues long: Cytochrome c-type biogenesis protein CcmE (148 aa).

At 1 to 7 (MKPRSKR) the chain is on the cytoplasmic side. Residues 8–28 (LLLVAGAVALLVGAVALVLNA) form a helical; Signal-anchor for type II membrane protein membrane-spanning segment. At 29–148 (FQQNLVFFHT…AQKAAQTVQQ (120 aa)) the chain is on the periplasmic side. H123 and Y127 together coordinate heme.

This sequence belongs to the CcmE/CycJ family.

Its subcellular location is the cell inner membrane. Functionally, heme chaperone required for the biogenesis of c-type cytochromes. Transiently binds heme delivered by CcmC and transfers the heme to apo-cytochromes in a process facilitated by CcmF and CcmH. This Aromatoleum aromaticum (strain DSM 19018 / LMG 30748 / EbN1) (Azoarcus sp. (strain EbN1)) protein is Cytochrome c-type biogenesis protein CcmE.